The primary structure comprises 205 residues: uncharacterized protein (205 aa).

This is an uncharacterized protein from Methanococcus vannielii (strain ATCC 35089 / DSM 1224 / JCM 13029 / OCM 148 / SB).